A 144-amino-acid chain; its full sequence is Actin-associated protein FAM107A (144 aa).

The stretch at 66–112 (ELQRVLEHRRRNQLIKKKKEELEAKRLQCPFEQELLRRQQRLNQLEK) forms a coiled coil. The short motif at 74–84 (RRRNQLIKKKK) is the Nuclear localization signal element. The tract at residues 105–124 (QRLNQLEKPPEKEEDHAPEF) is disordered. A compositionally biased stretch (basic and acidic residues) spans 112–124 (KPPEKEEDHAPEF).

The protein belongs to the FAM107 family. In terms of assembly, interacts with ACTB. Interacts with COMMD1; this interaction stabilizes COMMD1 in the nucleus. Interacts with MAP1A. Interacts with PRDX1. Interacts with F-actin. In terms of tissue distribution, widely expressed. Expressed in neurons. Expressed in malignant glial tumors. Expression is reduced or absent in a number of cancer cell lines.

Its subcellular location is the nucleus. The protein localises to the cytoplasm. It localises to the cytoskeleton. The protein resides in the stress fiber. It is found in the cell junction. Its subcellular location is the focal adhesion. The protein localises to the cell projection. It localises to the ruffle membrane. The protein resides in the synapse. In terms of biological role, stress-inducible actin-binding protein that plays a role in synaptic and cognitive functions by modulating actin filamentous (F-actin) dynamics. Mediates polymerization of globular actin to F-actin. Also binds to, stabilizes and bundles F-actin. Involved in synaptic function by regulating neurite outgrowth in an actin-dependent manner and for the acquisition of hippocampus-dependent cognitive function, such as learning and long-term memory. Plays a role in the actin and microtubule cytoskeleton organization; negatively regulates focal adhesion (FA) assembly promoting malignant glial cell migration in an actin-, microtubule- and MAP1A-dependent manner. Also involved in neuroblastoma G1/S phase cell cycle progression and cell proliferation inhibition by stimulating ubiquitination of NF-kappa-B subunit RELA and NF-kappa-B degradation in a COMMD1- and actin-dependent manner. May play a role in tumor development. The protein is Actin-associated protein FAM107A of Homo sapiens (Human).